Reading from the N-terminus, the 489-residue chain is Interferon gamma receptor 1 (489 aa).

The N-terminal stretch at 1-17 is a signal peptide; the sequence is MALLFLLPLVMQGVSRA. The Extracellular segment spans residues 18–245; that stretch reads EMGTADLGPS…ITIFNSSIKG (228 aa). N-linked (GlcNAc...) asparagine glycosylation is found at N34, N79, and N86. C77 and C85 are joined by a disulfide. C122 and C167 are joined by a disulfide. N179 is a glycosylation site (N-linked (GlcNAc...) asparagine). Intrachain disulfides connect C195-C200 and C214-C235. A glycan (N-linked (GlcNAc...) asparagine) is linked at N240. A helical transmembrane segment spans residues 246–266; sequence SLWIPVVAALLLFLVLSLVFI. The Cytoplasmic segment spans residues 267–489; sequence CFYIKKINPL…RPTEDSKEFS (223 aa). A disordered region spans residues 329 to 437; it reads ATVPGMHTED…SEFPPNNKGE (109 aa). Residues 335–348 show a composition bias toward basic and acidic residues; sequence HTEDNPGKVEHTEE. Over residues 349–360 the composition is skewed to polar residues; it reads LSSITEVVTTEE. Residue S369 is modified to Phosphoserine. The residue at position 372 (T372) is a Phosphothreonine. S378 carries the phosphoserine modification. Low complexity predominate over residues 379 to 391; that stretch reads SSPLSSNQSEPGS. The span at 401–412 shows a compositional bias: basic and acidic residues; that stretch reads NCSESDHSRNGF. Residue S403 is modified to Phosphoserine. The segment covering 415–429 has biased composition (low complexity); that stretch reads DSSCLESHSSLSDSE. Y457 carries the post-translational modification Phosphotyrosine.

The protein belongs to the type II cytokine receptor family. In terms of assembly, monomer. Heterodimer with IFNGR2, to form the IFNG receptor complex. Interacts with JAK1. Interacts (when phosphorylated) with STAT1. Interacts with SOCS1. Post-translationally, phosphorylated at Ser/Thr residues. Phosphorylation of Tyr-457 is required for IFNG receptor signal transduction. Influenza virus infection leads to phosphorylation in a CSNK1A1-dependent manner. In terms of processing, ubiquitinated after phosphorylation in a CSNK1A1-dependent manner, leading to the lysosome-dependent degradation. Proteasomally degraded through 'Lys-48'-mediated ubiquitination. Ubiquitination is necessary for efficient IFNGR1 signaling.

Its subcellular location is the cell membrane. Its function is as follows. Receptor subunit for interferon gamma/INFG that plays crucial roles in antimicrobial, antiviral, and antitumor responses by activating effector immune cells and enhancing antigen presentation. Associates with transmembrane accessory factor IFNGR2 to form a functional receptor. Upon ligand binding, the intracellular domain of IFNGR1 opens out to allow association of downstream signaling components JAK1 and JAK2. In turn, activated JAK1 phosphorylates IFNGR1 to form a docking site for STAT1. Subsequent phosphorylation of STAT1 leads to dimerization, translocation to the nucleus, and stimulation of target gene transcription. STAT3 can also be activated in a similar manner although activation seems weaker. IFNGR1 intracellular domain phosphorylation also provides a docking site for SOCS1 that regulates the JAK-STAT pathway by competing with STAT1 binding to IFNGR1. The polypeptide is Interferon gamma receptor 1 (Homo sapiens (Human)).